The primary structure comprises 262 residues: Ribose-5-phosphate isomerase A (262 aa).

Residues 33 to 36 (TGST), 89 to 92 (DGAD), and 102 to 105 (KGGG) contribute to the substrate site. Catalysis depends on E111, which acts as the Proton acceptor. Residue K129 participates in substrate binding.

The protein belongs to the ribose 5-phosphate isomerase family. In terms of assembly, homodimer.

It carries out the reaction aldehydo-D-ribose 5-phosphate = D-ribulose 5-phosphate. It functions in the pathway carbohydrate degradation; pentose phosphate pathway; D-ribose 5-phosphate from D-ribulose 5-phosphate (non-oxidative stage): step 1/1. Its function is as follows. Catalyzes the reversible conversion of ribose-5-phosphate to ribulose 5-phosphate. The protein is Ribose-5-phosphate isomerase A of Roseobacter denitrificans (strain ATCC 33942 / OCh 114) (Erythrobacter sp. (strain OCh 114)).